Consider the following 70-residue polypeptide: Metallothionein-like protein 1 (70 aa).

Belongs to the metallothionein superfamily. Type 15 family.

Functionally, metallothioneins have a high content of cysteine residues that bind various heavy metals. The polypeptide is Metallothionein-like protein 1 (MT1) (Festuca rubra (Red fescue)).